Consider the following 567-residue polypeptide: Malate synthase (567 aa).

Residue Arg177 is the Proton acceptor of the active site. Asp466 functions as the Proton donor in the catalytic mechanism. The short motif at 565–567 (CKL) is the Microbody targeting signal element.

This sequence belongs to the malate synthase family.

It localises to the glyoxysome. The catalysed reaction is glyoxylate + acetyl-CoA + H2O = (S)-malate + CoA + H(+). The protein operates within carbohydrate metabolism; glyoxylate cycle; (S)-malate from isocitrate: step 2/2. This is Malate synthase from Oryza sativa subsp. japonica (Rice).